A 201-amino-acid chain; its full sequence is uncharacterized protein (201 aa).

A compositionally biased stretch (acidic residues) spans 64-78 (DNEIKEEEESEEEEK). Disordered stretches follow at residues 64–114 (DNEI…FKNA) and 182–201 (ILPGGCTGNTETVDQGLSKQ). Residues 96–106 (RNKHGRNRNPR) are compositionally biased toward basic residues. Residues 189-201 (GNTETVDQGLSKQ) show a composition bias toward polar residues.

This is an uncharacterized protein from Ostreid herpesvirus 1 (isolate France) (OsHV-1).